A 227-amino-acid chain; its full sequence is Ribosomal RNA small subunit methyltransferase G (227 aa).

S-adenosyl-L-methionine is bound by residues Gly-74, Leu-79, 124–125 (AE), and Arg-142.

This sequence belongs to the methyltransferase superfamily. RNA methyltransferase RsmG family.

Its subcellular location is the cytoplasm. In terms of biological role, specifically methylates the N7 position of guanine in position 518 of 16S rRNA. The polypeptide is Ribosomal RNA small subunit methyltransferase G (Mycolicibacterium gilvum (strain PYR-GCK) (Mycobacterium gilvum (strain PYR-GCK))).